The primary structure comprises 414 residues: ATP-dependent Clp protease ATP-binding subunit ClpX (414 aa).

The ClpX-type ZB domain maps to 1 to 51; sequence MADSKTKKKCSFCGRSENEVGFLITGMNGYICDSCATQAYEITQEALGEGR. Residues Cys-10, Cys-13, Cys-32, and Cys-35 each contribute to the Zn(2+) site. 120–127 is an ATP binding site; that stretch reads STGTGKTL.

Belongs to the ClpX chaperone family. As to quaternary structure, component of the ClpX-ClpP complex. Forms a hexameric ring that, in the presence of ATP, binds to fourteen ClpP subunits assembled into a disk-like structure with a central cavity, resembling the structure of eukaryotic proteasomes.

ATP-dependent specificity component of the Clp protease. It directs the protease to specific substrates. Can perform chaperone functions in the absence of ClpP. The chain is ATP-dependent Clp protease ATP-binding subunit ClpX from Bacteroides thetaiotaomicron (strain ATCC 29148 / DSM 2079 / JCM 5827 / CCUG 10774 / NCTC 10582 / VPI-5482 / E50).